The chain runs to 150 residues: Meiotically up-regulated gene 108 protein (150 aa).

The span at 1–11 shows a compositional bias: polar residues; sequence MANRFTSSDQT. The interval 1 to 150 is disordered; the sequence is MANRFTSSDQ…RDISLLGSTI (150 aa). The segment covering 12–23 has biased composition (basic and acidic residues); that stretch reads QETHGHHVDKHS. The segment covering 83 to 93 has biased composition (polar residues); it reads NRSSQHTGRVN.

It is found in the cytoplasm. Its subcellular location is the nucleus. Functionally, has a role in meiosis. The polypeptide is Meiotically up-regulated gene 108 protein (mug108) (Schizosaccharomyces pombe (strain 972 / ATCC 24843) (Fission yeast)).